A 272-amino-acid chain; its full sequence is NAD kinase (272 aa).

Aspartate 50 functions as the Proton acceptor in the catalytic mechanism. Residues 50–51 (DG), 126–127 (NE), arginine 152, aspartate 154, 165–170 (TAYNKS), and alanine 189 contribute to the NAD(+) site.

The protein belongs to the NAD kinase family. The cofactor is a divalent metal cation.

Its subcellular location is the cytoplasm. It carries out the reaction NAD(+) + ATP = ADP + NADP(+) + H(+). Involved in the regulation of the intracellular balance of NAD and NADP, and is a key enzyme in the biosynthesis of NADP. Catalyzes specifically the phosphorylation on 2'-hydroxyl of the adenosine moiety of NAD to yield NADP. The polypeptide is NAD kinase (Streptococcus pneumoniae (strain 70585)).